Consider the following 37-residue polypeptide: 24 kDa antigen (37 aa).

This chain is 24 kDa antigen, found in Plasmodium chabaudi.